The following is an 89-amino-acid chain: Small ribosomal subunit protein uS15 (89 aa).

Belongs to the universal ribosomal protein uS15 family. As to quaternary structure, part of the 30S ribosomal subunit. Forms a bridge to the 50S subunit in the 70S ribosome, contacting the 23S rRNA.

In terms of biological role, one of the primary rRNA binding proteins, it binds directly to 16S rRNA where it helps nucleate assembly of the platform of the 30S subunit by binding and bridging several RNA helices of the 16S rRNA. Its function is as follows. Forms an intersubunit bridge (bridge B4) with the 23S rRNA of the 50S subunit in the ribosome. In Shewanella woodyi (strain ATCC 51908 / MS32), this protein is Small ribosomal subunit protein uS15.